The following is a 335-amino-acid chain: Cholinephosphotransferase 1 (335 aa).

Helical transmembrane passes span 53–73 (PNAI…PLIA) and 84–108 (FWAY…GKQA). Asn54 contacts CDP-choline. Mg(2+) contacts are provided by Asp101 and Asp104. Residue Arg109 participates in CDP-choline binding. Helical transmembrane passes span 116–140 (PLGE…SCIA), 151–169 (FFCC…WQTY), 181–197 (VTEV…VSAF), 213–238 (ELKF…RIIF), 267–276 (IGPGLLFLDQ), and 284–313 (EYVV…IAAH). Asp122 contacts Mg(2+). Catalysis depends on His123, which acts as the Proton acceptor. Residue Asp126 participates in Mg(2+) binding.

Belongs to the CDP-alcohol phosphatidyltransferase class-I family. It depends on Mg(2+) as a cofactor. Mn(2+) is required as a cofactor.

Its subcellular location is the golgi apparatus membrane. The catalysed reaction is CDP-choline + a 1,2-diacyl-sn-glycerol = a 1,2-diacyl-sn-glycero-3-phosphocholine + CMP + H(+). It catalyses the reaction 1-octadecanoyl-2-(5Z,8Z,11Z,14Z-eicosatetraenoyl)-sn-glycerol + CDP-choline = 1-octadecanoyl-2-(5Z,8Z,11Z,14Z-eicosatetraenoyl)-sn-glycero-3-phosphocholine + CMP + H(+). The enzyme catalyses 1-hexadecanoyl-2-(9Z-octadecenoyl)-sn-glycerol + CDP-choline = 1-hexadecanoyl-2-(9Z-octadecenoyl)-sn-glycero-3-phosphocholine + CMP + H(+). It carries out the reaction 1-hexadecanoyl-2-(4Z,7Z,10Z,13Z,16Z,19Z-docosahexaenoyl)-sn-glycerol + CDP-choline = 1-hexadecanoyl-2-(4Z,7Z,10Z,13Z,16Z,19Z-docosahexaenoyl)-sn-glycero-3-phosphocholine + CMP + H(+). The catalysed reaction is 1,2-dioctanoyl-sn-glycerol + CDP-choline = 1,2-dioctanoyl-sn-glycero-3-phosphocholine + CMP + H(+). It participates in phospholipid metabolism; phosphatidylcholine biosynthesis; phosphatidylcholine from phosphocholine: step 2/2. In terms of biological role, catalyzes the final step of de novo phosphatidylcholine (PC) synthesis, i.e. the transfer of choline phosphate from CDP-choline to the free hydroxyl of a diacylglycerol (DAG), producing a PC. It thereby plays a central role in the formation and maintenance of vesicular membranes. The chain is Cholinephosphotransferase 1 (CHPT1) from Gallus gallus (Chicken).